We begin with the raw amino-acid sequence, 308 residues long: MQANIFPFYPQPRTSFKFDTKIIEIIIICIVTACTFIIILPGIRGKSRSIWLFRILTSLFIGAVILAVNFTSDWETGIVTATTVYKSFSHSMLNASIGLWIGLKGVNITLIGNPVYQLNETINYNEEFAWESANQFDKNYKDGLERGLPYPILYVAEKFTINSPCGLFQQYCISTYYSSEIMWVAFGSWILYNVLFSMPVILYGICMMFVTAICMLVSLISFASVRQAPVCNIHFGNAVLKTHFGVSYWLSLVTGLFCLIVSLVLLFLYKTQPKVIRLIFSYGEEEDLSDKSENEEEHSSALSLNEML.

Topologically, residues 1–21 are extracellular; sequence MQANIFPFYPQPRTSFKFDTK. The helical transmembrane segment at 22 to 42 threads the bilayer; the sequence is IIEIIIICIVTACTFIIILPG. Over 43 to 49 the chain is Cytoplasmic; sequence IRGKSRS. A helical transmembrane segment spans residues 50–70; it reads IWLFRILTSLFIGAVILAVNF. Residues 71–172 are Extracellular-facing; it reads TSDWETGIVT…SPCGLFQQYC (102 aa). 3 N-linked (GlcNAc...) asparagine glycosylation sites follow: asparagine 94, asparagine 107, and asparagine 119. Residues 173-195 traverse the membrane as a helical segment; that stretch reads ISTYYSSEIMWVAFGSWILYNVL. The Cytoplasmic portion of the chain corresponds to 196–199; it reads FSMP. The helical transmembrane segment at 200–220 threads the bilayer; that stretch reads VILYGICMMFVTAICMLVSLI. Residues 221–247 lie on the Extracellular side of the membrane; the sequence is SFASVRQAPVCNIHFGNAVLKTHFGVS. A helical membrane pass occupies residues 248–268; sequence YWLSLVTGLFCLIVSLVLLFL. Residues 269-308 are Cytoplasmic-facing; it reads YKTQPKVIRLIFSYGEEEDLSDKSENEEEHSSALSLNEML.

It belongs to the DUOXA family.

The protein localises to the membrane. In terms of biological role, possible role in maturation and transport from the endoplasmic reticulum to the plasma membrane of functional dual oxidase. In Xenopus tropicalis (Western clawed frog), this protein is Dual oxidase maturation factor 1 (duoxa1).